We begin with the raw amino-acid sequence, 435 residues long: GTPase Der (435 aa).

2 EngA-type G domains span residues 4–167 and 175–350; these read PVVA…PEKD and IRFS…DNHN. Residues 10 to 17, 57 to 61, 119 to 122, 181 to 188, 228 to 232, and 293 to 296 contribute to the GTP site; these read GRPNVGKS, DTGGI, NKAD, DTAGI, and NKWD. The KH-like domain occupies 351–435; it reads KRVQSATLND…PIHLIERARK (85 aa).

The protein belongs to the TRAFAC class TrmE-Era-EngA-EngB-Septin-like GTPase superfamily. EngA (Der) GTPase family. In terms of assembly, associates with the 50S ribosomal subunit.

Its function is as follows. GTPase that plays an essential role in the late steps of ribosome biogenesis. The polypeptide is GTPase Der (Levilactobacillus brevis (strain ATCC 367 / BCRC 12310 / CIP 105137 / JCM 1170 / LMG 11437 / NCIMB 947 / NCTC 947) (Lactobacillus brevis)).